Here is a 1984-residue protein sequence, read N- to C-terminus: Vitellogenin receptor Yl (1984 aa).

A compositionally biased stretch (basic and acidic residues) spans 1–19; it reads MCQAEHQVHPSEQRIRVES. Residues 1 to 48 form a disordered region; it reads MCQAEHQVHPSEQRIRVESPKMTASRRGFNLTSQTRAHPSSGGSTSSR. Residue N30 is glycosylated (N-linked (GlcNAc...) asparagine). Positions 30–48 are enriched in polar residues; it reads NLTSQTRAHPSSGGSTSSR. 5 consecutive LDL-receptor class A domains span residues 89–125, 128–167, 183–221, 226–263, and 265–305; these read RCDA…LDCD, LCRP…LNCP, SCSK…AGCK, TCPG…RGCL, and LCEP…DLCH. 20 disulfides stabilise this stretch: C90-C102, C97-C115, C109-C124, C129-C144, C137-C157, C151-C166, C184-C197, C191-C210, C204-C220, C227-C239, C234-C253, C247-C262, C266-C281, C275-C294, C288-C304, C310-C321, C315-C331, C352-C363, C359-C372, and C374-C387. In terms of domain architecture, EGF-like 1 spans 306 to 343; it reads SKPDCDAKKCALGAKCHMMPASGAECFCPKGFRLAKFE. Positions 348-388 constitute an EGF-like 2; calcium-binding domain; that stretch reads DVDECKEQDDLCSQGCENTSGGYRCVCDAGYLLDKDNRTCR. 3 N-linked (GlcNAc...) asparagine glycosylation sites follow: N365, N384, and N429. LDL-receptor class B repeat units follow at residues 441–485, 486–528, 529–572, and 573–615; these read SHIY…DWLT, QNIY…WPQK, GLMF…DMHQ, and QRIY…FEDQ. Residues N666, N749, and N782 are each glycosylated (N-linked (GlcNAc...) asparagine). LDL-receptor class B repeat units lie at residues 750–792, 793–836, 884–925, and 934–940; these read GSLI…DHLS, RNLY…MPAE, QTIF…VHHD, and PRIYWTH. N1022 is a glycosylation site (N-linked (GlcNAc...) asparagine). 5 consecutive LDL-receptor class A domains span residues 1024–1063, 1073–1110, 1117–1153, 1157–1194, and 1197–1233; these read TCVE…MNCD, LCSP…QHCE, KCHV…LLCE, RCEP…DKCV, and SCPP…LNCG. 15 disulfide bridges follow: C1025–C1040, C1035–C1053, C1047–C1062, C1074–C1087, C1081–C1100, C1094–C1109, C1118–C1130, C1125–C1143, C1137–C1152, C1158–C1170, C1165–C1183, C1177–C1193, C1198–C1210, C1205–C1223, and C1217–C1232. An N-linked (GlcNAc...) asparagine glycan is attached at N1240. LDL-receptor class A domains lie at 1242–1280 and 1282–1319; these read SCAE…ADCG and VCSI…LSCE. Disulfide bonds link C1243/C1257, C1250/C1270, C1264/C1279, C1283/C1296, C1290/C1309, and C1303/C1318. N1265 carries N-linked (GlcNAc...) asparagine glycosylation. N1326 carries an N-linked (GlcNAc...) asparagine glycan. The 38-residue stretch at 1339–1376 folds into the LDL-receptor class A 13 domain; that stretch reads SCRPHLFDCQDGECVDLSRVCNNFPDCTNGHDEGPKCA. 5 disulfide bridges follow: C1340–C1352, C1347–C1365, C1359–C1375, C1422–C1432, and C1428–C1441. Residues 1418-1453 form the EGF-like 3; calcium-binding domain; that stretch reads DIDECQEQQPCAQLCENTLGGYQCQCHADFMLRQDR. N1475 and N1490 each carry an N-linked (GlcNAc...) asparagine glycan. LDL-receptor class B repeat units follow at residues 1588–1637 and 1638–1687; these read ARIF…DPHQ and QLLY…YENN. A helical transmembrane segment spans residues 1800 to 1820; that stretch reads WLMALFVLAAGSLIAGLGYMY. Residues 1821-1984 lie on the Cytoplasmic side of the membrane; it reads YQYRQRGHTD…GNDANARFVS (164 aa). S1926 carries the phosphoserine modification. Disordered regions lie at residues 1927 to 1951 and 1965 to 1984; these read KLHA…RQVP and SAGQ…RFVS. The span at 1932 to 1946 shows a compositional bias: gly residues; the sequence is DGGGAGGDGDGGRGV.

Belongs to the LDLR family. As to quaternary structure, interacts with osk (isoform A). In terms of tissue distribution, ovary.

It is found in the cell membrane. Its subcellular location is the cytoplasm. The protein resides in the cell cortex. The protein localises to the cytoplasmic vesicle. It localises to the clathrin-coated vesicle membrane. It is found in the early endosome membrane. Its subcellular location is the endosome. The protein resides in the multivesicular body lumen. In terms of biological role, cell surface receptor involved in uptake of vitellogenins (yolk proteins) into developing oocytes by receptor-mediated endocytosis. May also mediate uptake of apolpp/apolipophorins and their incorporation into yolk granules. Along with its ligands, required for maintenance of microtubule plus-end orientation towards the posterior pole of oocytes. Involved in polarized localization of germ plasm components, such as osk mRNA and vas protein, to the oocyte posterior cortex. Receptor-mediated endocytosis of vitellogenin receptor ligands is critical for osk (isoform A) mediated actin reorganization and the anchoring of germ plasm components to the oocyte cortex. The protein is Vitellogenin receptor Yl of Drosophila melanogaster (Fruit fly).